Reading from the N-terminus, the 460-residue chain is Phosphomethylpyrimidine synthase (460 aa).

Substrate contacts are provided by residues Asn80, Met109, Tyr139, His175, Ser195–Gly197, Asp236–Arg239, and Glu275. His279 provides a ligand contact to Zn(2+). Tyr302 is a binding site for substrate. His343 is a Zn(2+) binding site. [4Fe-4S] cluster contacts are provided by Cys423, Cys426, and Cys431.

Belongs to the ThiC family. [4Fe-4S] cluster is required as a cofactor.

The catalysed reaction is 5-amino-1-(5-phospho-beta-D-ribosyl)imidazole + S-adenosyl-L-methionine = 4-amino-2-methyl-5-(phosphooxymethyl)pyrimidine + CO + 5'-deoxyadenosine + formate + L-methionine + 3 H(+). It functions in the pathway cofactor biosynthesis; thiamine diphosphate biosynthesis. In terms of biological role, catalyzes the synthesis of the hydroxymethylpyrimidine phosphate (HMP-P) moiety of thiamine from aminoimidazole ribotide (AIR) in a radical S-adenosyl-L-methionine (SAM)-dependent reaction. The sequence is that of Phosphomethylpyrimidine synthase from Rippkaea orientalis (strain PCC 8801 / RF-1) (Cyanothece sp. (strain PCC 8801)).